Reading from the N-terminus, the 130-residue chain is Fluoride-specific ion channel FluC (130 aa).

4 consecutive transmembrane segments (helical) span residues 7–27 (VLAI…LGLW), 36–56 (LGTL…VAVF), 69–89 (ALIT…AEVV), and 99–119 (LGFG…LAGI). 2 residues coordinate Na(+): G76 and T79.

Belongs to the fluoride channel Fluc/FEX (TC 1.A.43) family.

It is found in the cell inner membrane. It carries out the reaction fluoride(in) = fluoride(out). With respect to regulation, na(+) is not transported, but it plays an essential structural role and its presence is essential for fluoride channel function. In terms of biological role, fluoride-specific ion channel. Important for reducing fluoride concentration in the cell, thus reducing its toxicity. This chain is Fluoride-specific ion channel FluC, found in Albidiferax ferrireducens (strain ATCC BAA-621 / DSM 15236 / T118) (Rhodoferax ferrireducens).